We begin with the raw amino-acid sequence, 283 residues long: Pantothenate synthetase (283 aa).

ATP is bound at residue 33 to 40 (MGALHEGH). The active-site Proton donor is His-40. Residue Gln-64 coordinates (R)-pantoate. Residue Gln-64 participates in beta-alanine binding. Position 150 to 153 (150 to 153 (GEKD)) interacts with ATP. Gln-156 lines the (R)-pantoate pocket. ATP is bound by residues Ile-179 and 187-190 (MSSR).

Belongs to the pantothenate synthetase family. In terms of assembly, homodimer.

Its subcellular location is the cytoplasm. The catalysed reaction is (R)-pantoate + beta-alanine + ATP = (R)-pantothenate + AMP + diphosphate + H(+). It functions in the pathway cofactor biosynthesis; (R)-pantothenate biosynthesis; (R)-pantothenate from (R)-pantoate and beta-alanine: step 1/1. Catalyzes the condensation of pantoate with beta-alanine in an ATP-dependent reaction via a pantoyl-adenylate intermediate. This is Pantothenate synthetase from Mesorhizobium japonicum (strain LMG 29417 / CECT 9101 / MAFF 303099) (Mesorhizobium loti (strain MAFF 303099)).